The sequence spans 671 residues: NADH-quinone oxidoreductase subunit G (671 aa).

Positions 1-78 (MIKLNVDGSE…GMVIHTDTPM (78 aa)) constitute a 2Fe-2S ferredoxin-type domain. 4 residues coordinate [2Fe-2S] cluster: cysteine 34, cysteine 45, cysteine 48, and cysteine 62. Residues 78–117 (MVKKAREGVMEFLLINHPLDCPICDQGGECNLQDQAFRYG) enclose the 4Fe-4S His(Cys)3-ligated-type domain. Residues histidine 94, cysteine 98, cysteine 101, cysteine 107, cysteine 146, cysteine 149, cysteine 152, and cysteine 196 each contribute to the [4Fe-4S] cluster site. Residues 215-271 (LKHTASIGVHDAEGSNIRIDSRGDEVMRILPRVNEEINEEWLSDKNRFSYDGLKYQR) enclose the 4Fe-4S Mo/W bis-MGD-type domain.

It belongs to the complex I 75 kDa subunit family. [2Fe-2S] cluster serves as cofactor. The cofactor is [4Fe-4S] cluster.

It catalyses the reaction a quinone + NADH + 5 H(+)(in) = a quinol + NAD(+) + 4 H(+)(out). Its function is as follows. NDH-1 shuttles electrons from NADH, via FMN and iron-sulfur (Fe-S) centers, to quinones in the respiratory chain. Couples the redox reaction to proton translocation (for every two electrons transferred, four hydrogen ions are translocated across the cytoplasmic membrane), and thus conserves the redox energy in a proton gradient. The protein is NADH-quinone oxidoreductase subunit G (nuoG) of Rickettsia conorii (strain ATCC VR-613 / Malish 7).